The sequence spans 36 residues: Photosystem I reaction center subunit VIII (36 aa).

Residues 8 to 28 form a helical membrane-spanning segment; sequence SIFVPLVGLVFPAIAIASLFL.

It belongs to the PsaI family.

The protein localises to the plastid. The protein resides in the chloroplast thylakoid membrane. May help in the organization of the PsaL subunit. This is Photosystem I reaction center subunit VIII from Jasminum nudiflorum (Winter jasmine).